A 129-amino-acid polypeptide reads, in one-letter code: Protein Turandot A1/2 (129 aa).

A signal peptide spans 1 to 21; sequence MNSSTALMCFALLLISPLCLG. Asn-49 carries N-linked (GlcNAc...) asparagine glycosylation.

Belongs to the Turandot family.

It is found in the secreted. Its function is as follows. A humoral factor that plays a role in stress tolerance; gives increased resistance to the lethal effects of bacterial challenge and stress. Regulated by the JAK/STAT pathway and NF-KB-like Relish pathway in the fat body, upd3 in the hemocytes and Mekk1 in response to septic injury and consequent immune response. This Drosophila sechellia (Fruit fly) protein is Protein Turandot A1/2 (TotA1).